The sequence spans 102 residues: Large ribosomal subunit protein bL21 (102 aa).

Belongs to the bacterial ribosomal protein bL21 family. As to quaternary structure, part of the 50S ribosomal subunit. Contacts protein L20.

Functionally, this protein binds to 23S rRNA in the presence of protein L20. The chain is Large ribosomal subunit protein bL21 from Limosilactobacillus fermentum (strain NBRC 3956 / LMG 18251) (Lactobacillus fermentum).